Consider the following 84-residue polypeptide: MSIFPIVLALLLIGLEETEALDGYPLSKINNCKIYCPDDDVCKWTCKHRAGATNGKGDCIWYGCYCYDVAPGTKMYPGSSPCYA.

The N-terminal stretch at 1-20 (MSIFPIVLALLLIGLEETEA) is a signal peptide. The 63-residue stretch at 21–83 (LDGYPLSKIN…KMYPGSSPCY (63 aa)) folds into the LCN-type CS-alpha/beta domain. 4 cysteine pairs are disulfide-bonded: C32–C82, C36–C59, C42–C64, and C46–C66.

As to expression, expressed by the venom gland.

The protein localises to the secreted. In terms of biological role, inhibits voltage-gated sodium channels (Nav). The chain is Toxin To7 from Tityus obscurus (Amazonian scorpion).